The sequence spans 660 residues: DNA mismatch repair protein MutL (660 aa).

The protein belongs to the DNA mismatch repair MutL/HexB family.

In terms of biological role, this protein is involved in the repair of mismatches in DNA. It is required for dam-dependent methyl-directed DNA mismatch repair. May act as a 'molecular matchmaker', a protein that promotes the formation of a stable complex between two or more DNA-binding proteins in an ATP-dependent manner without itself being part of a final effector complex. The sequence is that of DNA mismatch repair protein MutL from Streptococcus pyogenes serotype M3 (strain ATCC BAA-595 / MGAS315).